Consider the following 240-residue polypeptide: Uridylate kinase (240 aa).

ATP is bound at residue 12–15; the sequence is KLSG. Residues 20–25 are involved in allosteric activation by GTP; it reads GEQGFG. G54 provides a ligand contact to UMP. ATP-binding residues include G55 and R59. UMP contacts are provided by residues D74 and 135–142; that span reads TGNPYFST. Residues N163, Y169, and D172 each coordinate ATP.

This sequence belongs to the UMP kinase family. In terms of assembly, homohexamer.

Its subcellular location is the cytoplasm. It catalyses the reaction UMP + ATP = UDP + ADP. Its pathway is pyrimidine metabolism; CTP biosynthesis via de novo pathway; UDP from UMP (UMPK route): step 1/1. Its activity is regulated as follows. Allosterically activated by GTP. Inhibited by UTP. Catalyzes the reversible phosphorylation of UMP to UDP. The protein is Uridylate kinase of Bacillus anthracis.